The primary structure comprises 326 residues: Nucleoporin Nup37 (326 aa).

WD repeat units lie at residues Ser-6–Glu-54, Ile-61–Ser-109, Asn-115–Leu-154, Thr-159–Leu-195, Gln-199–Ile-237, Tyr-242–Ile-282, and His-287–Thr-324.

Component of the Nup107-160 subcomplex of the nuclear pore complex (NPC). The Nup107-160 subcomplex includes NUP160, NUP133, NUP107, NUP98, NUP85, NUP43, NUP37, SEH1 and SEC13.

It is found in the chromosome. The protein resides in the centromere. It localises to the kinetochore. Its subcellular location is the nucleus. The protein localises to the nuclear pore complex. Its function is as follows. Component of the Nup107-160 subcomplex of the nuclear pore complex (NPC). The Nup107-160 subcomplex is required for the assembly of a functional NPC. The Nup107-160 subcomplex is also required for normal kinetochore microtubule attachment, mitotic progression and chromosome segregation. In Homo sapiens (Human), this protein is Nucleoporin Nup37 (NUP37).